The primary structure comprises 438 residues: Glutamate-1-semialdehyde 2,1-aminomutase (438 aa).

Position 277 is an N6-(pyridoxal phosphate)lysine (Lys277).

This sequence belongs to the class-III pyridoxal-phosphate-dependent aminotransferase family. HemL subfamily. In terms of assembly, homodimer. It depends on pyridoxal 5'-phosphate as a cofactor.

The protein localises to the cytoplasm. It carries out the reaction (S)-4-amino-5-oxopentanoate = 5-aminolevulinate. It participates in porphyrin-containing compound metabolism; protoporphyrin-IX biosynthesis; 5-aminolevulinate from L-glutamyl-tRNA(Glu): step 2/2. Its pathway is porphyrin-containing compound metabolism; chlorophyll biosynthesis. The polypeptide is Glutamate-1-semialdehyde 2,1-aminomutase (Synechococcus sp. (strain CC9311)).